We begin with the raw amino-acid sequence, 397 residues long: Lysophospholipid transporter LplT (397 aa).

At methionine 1–lysine 17 the chain is on the periplasmic side. A helical transmembrane segment spans residues alanine 18–leucine 38. The Cytoplasmic segment spans residues alanine 39–proline 52. A helical transmembrane segment spans residues isoleucine 53–alanine 73. The Periplasmic segment spans residues aspartate 74–leucine 90. Residues leucine 91–valine 111 form a helical membrane-spanning segment. Residues glycine 112–threonine 144 lie on the Cytoplasmic side of the membrane. Residues isoleucine 145–valine 165 traverse the membrane as a helical segment. Alanine 166 is a topological domain (periplasmic). A helical membrane pass occupies residues leucine 167–leucine 187. The Cytoplasmic portion of the chain corresponds to alanine 188–serine 226. A helical transmembrane segment spans residues leucine 227 to leucine 247. Topologically, residues glycine 248–threonine 256 are periplasmic. A helical transmembrane segment spans residues tyrosine 257–valine 277. Over threonine 278–glutamate 280 the chain is Cytoplasmic. The helical transmembrane segment at threonine 281–leucine 301 threads the bilayer. The Periplasmic segment spans residues glutamine 302–glutamate 304. Residues leucine 305–proline 325 form a helical membrane-spanning segment. Residues leucine 326–alanine 343 lie on the Cytoplasmic side of the membrane. Residues isoleucine 344–leucine 364 traverse the membrane as a helical segment. Topologically, residues alanine 365 to valine 366 are periplasmic. Residues methionine 367–isoleucine 387 traverse the membrane as a helical segment. Topologically, residues threonine 388–histidine 397 are cytoplasmic.

This sequence belongs to the major facilitator superfamily. LplT (TC 2.A.1.42) family.

The protein localises to the cell inner membrane. Its function is as follows. Catalyzes the facilitated diffusion of 2-acyl-glycero-3-phosphoethanolamine (2-acyl-GPE) into the cell. This chain is Lysophospholipid transporter LplT, found in Shigella boydii serotype 4 (strain Sb227).